A 108-amino-acid chain; its full sequence is N(4)-acetylcytidine amidohydrolase (108 aa).

The region spanning Ile-5–Val-102 is the ASCH domain. Lys-20 functions as the Proton acceptor in the catalytic mechanism. Thr-23 serves as the catalytic Nucleophile. The Proton donor role is filled by Glu-73.

It belongs to the N(4)-acetylcytidine amidohydrolase family.

It catalyses the reaction N(4)-acetylcytidine + H2O = cytidine + acetate + H(+). The catalysed reaction is N(4)-acetyl-2'-deoxycytidine + H2O = 2'-deoxycytidine + acetate + H(+). It carries out the reaction N(4)-acetylcytosine + H2O = cytosine + acetate + H(+). Its function is as follows. Catalyzes the hydrolysis of N(4)-acetylcytidine (ac4C). The sequence is that of N(4)-acetylcytidine amidohydrolase from Moritella marina (Vibrio marinus).